A 26-amino-acid chain; its full sequence is Dermaseptin-J1 (26 aa).

Valine amide is present on V26.

As to expression, expressed by the skin glands.

Its subcellular location is the secreted. Functionally, has antimicrobial activity. The chain is Dermaseptin-J1 from Phasmahyla jandaia (Jandaia leaf frog).